A 362-amino-acid polypeptide reads, in one-letter code: Peptide chain release factor 1 (362 aa).

An N5-methylglutamine modification is found at Q237.

This sequence belongs to the prokaryotic/mitochondrial release factor family. In terms of processing, methylated by PrmC. Methylation increases the termination efficiency of RF1.

Its subcellular location is the cytoplasm. Its function is as follows. Peptide chain release factor 1 directs the termination of translation in response to the peptide chain termination codons UAG and UAA. In Vibrio campbellii (strain ATCC BAA-1116), this protein is Peptide chain release factor 1.